Reading from the N-terminus, the 125-residue chain is uncharacterized protein (125 aa).

It is found in the plastid. The protein localises to the chloroplast. This is an uncharacterized protein from Guillardia theta (Cryptophyte).